Here is a 407-residue protein sequence, read N- to C-terminus: Frizzled/smoothened-like sans CRD protein J (407 aa).

A signal peptide spans 1–23 (MKFLFSVILVIISFLGISKIVNG). Topologically, residues 24–89 (QIACPSPFLY…WNSFNKLVKQ (66 aa)) are extracellular. Asn37 carries an N-linked (GlcNAc...) asparagine glycan. The chain crosses the membrane as a helical span at residues 90–110 (MGAVAFTCSAIIMIIYGPLMN). Over 111 to 120 (RSFFKFDRHT) the chain is Cytoplasmic. The chain crosses the membrane as a helical span at residues 121–141 (ITVFCFALSTFFIGVSDLMFA). The Extracellular portion of the chain corresponds to 142 to 169 (TNDVDMVCPESHRYARQTDKTCATNGVL). A helical transmembrane segment spans residues 170–190 (FQFGWLGSVMWFAFLSIDGFF). Over 191-199 (RASGKKMNK) the chain is Cytoplasmic. The chain crosses the membrane as a helical span at residues 200–220 (IAFAIVLASIWILNIVLSFAP). At 221–246 (MGGDQYGAYFVGQVNCWILVKNWQYA) the chain is on the extracellular side. A helical membrane pass occupies residues 247-267 (FFWAELIVSLAIGFVGICLTI). At 268–285 (YSLIRKTSDGNTLKHVTP) the chain is on the cytoplasmic side. The helical transmembrane segment at 286–306 (LILVFLLFCQYLYMIIFYGII) threads the bilayer. At 307 to 354 (NEKKDHYQNILAEQVGCIFNNALAKMKVPGIVYAGECTFNETITFSSQ) the chain is on the extracellular side. A glycan (N-linked (GlcNAc...) asparagine) is linked at Asn346. A helical transmembrane segment spans residues 355–375 (YAFLFFVRLLGIEIFAFYLFS). Over 376–407 (KETLLLIKSSYIATMFGLGDKDAYDVELEETD) the chain is Cytoplasmic.

The protein belongs to the G-protein coupled receptor Fz/Smo family.

Its subcellular location is the membrane. The chain is Frizzled/smoothened-like sans CRD protein J (fscJ) from Dictyostelium discoideum (Social amoeba).